The sequence spans 208 residues: MTNVLFIKANGLPAERSVSVALYEIFLTEYKKSHPDDNVTELDLFEADLPYYDVTMMSGLHKEAAGETLSPEEKRLADIANSYLDQFLAADKIVMAFPLWNFSIPAQFLTYLFYLNQAGKTFKYTANGPVGLVADKKIALLNARGGIYSDGPMQSFEMSLSYVKNVLAHFGISEPEMVIVEGHNAKPDQAKDIISAGAKEAVELAKIF.

17-19 (SVS) is a binding site for FMN.

The protein belongs to the azoreductase type 1 family. In terms of assembly, homodimer. FMN serves as cofactor.

It catalyses the reaction 2 a quinone + NADH + H(+) = 2 a 1,4-benzosemiquinone + NAD(+). The catalysed reaction is N,N-dimethyl-1,4-phenylenediamine + anthranilate + 2 NAD(+) = 2-(4-dimethylaminophenyl)diazenylbenzoate + 2 NADH + 2 H(+). Quinone reductase that provides resistance to thiol-specific stress caused by electrophilic quinones. Its function is as follows. Also exhibits azoreductase activity. Catalyzes the reductive cleavage of the azo bond in aromatic azo compounds to the corresponding amines. This is FMN-dependent NADH:quinone oxidoreductase 1 from Listeria monocytogenes serotype 4b (strain F2365).